The chain runs to 239 residues: Non-structural protein V (239 aa).

Disordered stretches follow at residues 30 to 104 and 126 to 180; these read PVET…ADEA and NKSS…HRRE. Residues 65–74 show a composition bias toward basic and acidic residues; sequence TPDRQDRSDK. Composition is skewed to polar residues over residues 89–98 and 143–153; these read PATSTDQPPT and ASSTSDSTAGE. The Zn(2+) site is built by histidine 177, cysteine 196, cysteine 200, cysteine 212, cysteine 214, cysteine 217, cysteine 221, and cysteine 224.

In terms of assembly, interacts with host STAT1. Interacts with host TXNL1. Interacts (via C-terminus) with host CacyBP; this interaction inhibits host cell apoptosis.

The protein localises to the host cytoplasm. It localises to the host nucleus. Functionally, protects the virus against cell antiviral state by blocking host interferon signaling. Mechanistically, targets host phosphorylated STAT1 (phospho-STAT1) for degradation, thereby inhibiting the interferon alpha signaling pathway. Plays a role in the inhibition of host apoptosis. Interacts with and down-regulates the expression of host TXNL1. In turn, inhibits TXNL1-induced apoptosis through the BCL2-BAX-caspase 3 pathway. Inhibits host apoptosis also by negatively regulating host CacyBP/SIP. Promotes viral replication by activating the extracellular signal-regulated kinase (ERK) pathway. The polypeptide is Non-structural protein V (P/V) (Gallus gallus (Chicken)).